We begin with the raw amino-acid sequence, 395 residues long: MNYQPTSEDRFTFGLWTVGWQGLDPFGDATREALDPAESVRRLSQLGAYGVTFHDDELIPFGSSDNERGVAHGAGVAHQAVPAGAGRDRHEGADGDDEPVHAPGCSRDGAFTANDRDVRGTRCARAIRNIDLAVEHVARASTCAWGGREGAESGAAKDVRDALDRMKEAFDLLGEYVTEQGYDLKFAIEPKPNEPRGDILLPTVGHALAFIERLERPELYGVNPEVGHEQMAGLNFPHGIAQALWAGKLFHIDLNGQSGIKYDQDLRFGAGDLRAAFWLVDLLERAGYAGPRHFDFKPPRTENFDAVWPSAAGCMRNYLILKDRAAAFRADPQVQEALAAARLDELARPTAEDGLAALLADRSAYDTFDVDAAAARGMAFEHLDQLAMDHLLGAR.

Residues His-54 and Glu-57 contribute to the active site. The segment at 80-108 (AVPAGAGRDRHEGADGDDEPVHAPGCSRD) is disordered. Mg(2+) contacts are provided by Glu-189, Glu-225, His-228, Asp-253, Asp-263, Asp-265, and Asp-295.

The protein belongs to the xylose isomerase family. In terms of assembly, homotetramer. Mg(2+) serves as cofactor.

The protein resides in the cytoplasm. It carries out the reaction alpha-D-xylose = alpha-D-xylulofuranose. The polypeptide is Xylose isomerase (Streptomyces lividans).